Reading from the N-terminus, the 339-residue chain is Dihydroorotate dehydrogenase (quinone) (339 aa).

FMN is bound by residues 64 to 68 (AGADK) and Thr-88. Lys-68 is a binding site for substrate. Residue 113-117 (NRNGF) participates in substrate binding. FMN is bound by residues Asn-141 and Asn-174. Asn-174 provides a ligand contact to substrate. Ser-177 functions as the Nucleophile in the catalytic mechanism. Asn-179 serves as a coordination point for substrate. The FMN site is built by Lys-219 and Thr-247. 248 to 249 (NT) is a binding site for substrate. FMN-binding positions include Gly-270, Gly-299, and 320–321 (YS).

The protein belongs to the dihydroorotate dehydrogenase family. Type 2 subfamily. Monomer. It depends on FMN as a cofactor.

The protein resides in the cell membrane. The catalysed reaction is (S)-dihydroorotate + a quinone = orotate + a quinol. It functions in the pathway pyrimidine metabolism; UMP biosynthesis via de novo pathway; orotate from (S)-dihydroorotate (quinone route): step 1/1. In terms of biological role, catalyzes the conversion of dihydroorotate to orotate with quinone as electron acceptor. The chain is Dihydroorotate dehydrogenase (quinone) from Haemophilus influenzae (strain 86-028NP).